A 397-amino-acid chain; its full sequence is Dual specificity mitogen-activated protein kinase kinase 4 (397 aa).

Residues 1–38 (MAAPSPSGGGGSGGGGGTPGPIGPPASGHPAVSSMQGK) are disordered. A2 carries the post-translational modification N-acetylalanine. The span at 7-20 (SGGGGSGGGGGTPG) shows a compositional bias: gly residues. The segment at 35–50 (MQGKRKALKLNFANPP) is d domain. The residue at position 56 (R56) is an Asymmetric dimethylarginine; alternate. R56 bears the Omega-N-methylarginine; alternate mark. S88 bears the Phosphoserine mark. The 267-residue stretch at 100-366 (LKDLGEIGRG…KELLKHPFIL (267 aa)) folds into the Protein kinase domain. ATP-binding positions include 106–114 (IGRGAYGSV) and K129. Catalysis depends on D227, which acts as the Proton acceptor. Position 255 is a phosphoserine (S255). T259 is modified (phosphothreonine). The tract at residues 362 to 385 (HPFILMYEERTVEVACYVCKILDQ) is DVD domain.

This sequence belongs to the protein kinase superfamily. STE Ser/Thr protein kinase family. MAP kinase kinase subfamily. As to quaternary structure, interacts with SPAG9. Interacts (via its D domain) with its substrates MAPK8/JNK1, MAPK9/JNK2, MAPK10/JNK3, MAPK11 and MAPK14. Interacts (via its DVD domain) with MAP3Ks activators like MAP3K1/MEKK1 and MAP3K11/MLK3. Interacts with ARRB1, ARRB2 and MAPK8IP3/JIP3. Activated by phosphorylation on Ser-255 and Thr-259 by MAP kinase kinase kinases (MAP3Ks). In terms of tissue distribution, strong expression is detected in most of the central nervous system and in liver and thymus during early stages of development. While expression in nervous system increases over time, expression in fetal liver and thymus gradually decreases as embryogenesis proceeds. High level of expression in the central nervous system persists throughout postnatal development and remained at a stable level in adult brain.

The protein localises to the cytoplasm. It is found in the nucleus. It carries out the reaction L-seryl-[protein] + ATP = O-phospho-L-seryl-[protein] + ADP + H(+). The catalysed reaction is L-threonyl-[protein] + ATP = O-phospho-L-threonyl-[protein] + ADP + H(+). The enzyme catalyses L-tyrosyl-[protein] + ATP = O-phospho-L-tyrosyl-[protein] + ADP + H(+). Activated in response to a variety of cellular stresses, including UV and gamma-irradiation, heat shock, hyperosmolarity, T-cell receptor stimulation, peroxide and inflammatory cytokines. Also activated by developmental cues. MAP2K4/MKK4 is activated by the majority of MKKKs, such as MAP3K5/ASK1, MAP3K1/MEKK1, MAP3K7/TAK1, MAP3K10/MLK2, MAP3K11/MLK3, MAP3K12/DLK and MAP3K13/LZK. Functionally, dual specificity protein kinase which acts as an essential component of the MAP kinase signal transduction pathway. Essential component of the stress-activated protein kinase/c-Jun N-terminal kinase (SAP/JNK) signaling pathway. With MAP2K7/MKK7, is the one of the only known kinase to directly activate the stress-activated protein kinase/c-Jun N-terminal kinases MAPK8/JNK1, MAPK9/JNK2 and MAPK10/JNK3. MAP2K4/MKK4 and MAP2K7/MKK7 both activate the JNKs by phosphorylation, but they differ in their preference for the phosphorylation site in the Thr-Pro-Tyr motif. MAP2K4 shows preference for phosphorylation of the Tyr residue and MAP2K7/MKK7 for the Thr residue. The phosphorylation of the Thr residue by MAP2K7/MKK7 seems to be the prerequisite for JNK activation at least in response to pro-inflammatory cytokines, while other stimuli activate both MAP2K4/MKK4 and MAP2K7/MKK7 which synergistically phosphorylate JNKs. MAP2K4 is required for maintaining peripheral lymphoid homeostasis. The MKK/JNK signaling pathway is also involved in mitochondrial death signaling pathway, including the release cytochrome c, leading to apoptosis. Whereas MAP2K7/MKK7 exclusively activates JNKs, MAP2K4/MKK4 additionally activates the p38 MAPKs MAPK11, MAPK12, MAPK13 and MAPK14. The chain is Dual specificity mitogen-activated protein kinase kinase 4 (Map2k4) from Mus musculus (Mouse).